Here is a 66-residue protein sequence, read N- to C-terminus: Large ribosomal subunit protein bL33c (66 aa).

It belongs to the bacterial ribosomal protein bL33 family.

The protein localises to the plastid. The protein resides in the chloroplast. In Oryza nivara (Indian wild rice), this protein is Large ribosomal subunit protein bL33c.